The primary structure comprises 104 residues: Large ribosomal subunit protein uL24 (104 aa).

It belongs to the universal ribosomal protein uL24 family. In terms of assembly, part of the 50S ribosomal subunit.

Functionally, one of two assembly initiator proteins, it binds directly to the 5'-end of the 23S rRNA, where it nucleates assembly of the 50S subunit. Its function is as follows. One of the proteins that surrounds the polypeptide exit tunnel on the outside of the subunit. The sequence is that of Large ribosomal subunit protein uL24 from Caulobacter sp. (strain K31).